The primary structure comprises 119 residues: Holo-[acyl-carrier-protein] synthase (119 aa).

Mg(2+)-binding residues include aspartate 8 and glutamate 58.

This sequence belongs to the P-Pant transferase superfamily. AcpS family. The cofactor is Mg(2+).

Its subcellular location is the cytoplasm. It carries out the reaction apo-[ACP] + CoA = holo-[ACP] + adenosine 3',5'-bisphosphate + H(+). Transfers the 4'-phosphopantetheine moiety from coenzyme A to a Ser of acyl-carrier-protein. The chain is Holo-[acyl-carrier-protein] synthase from Bacillus cereus (strain ATCC 10987 / NRS 248).